Consider the following 282-residue polypeptide: Acetylglutamate kinase (282 aa).

Residues 62-63 (GG), R84, and N178 each bind substrate.

It belongs to the acetylglutamate kinase family. ArgB subfamily.

It is found in the cytoplasm. It carries out the reaction N-acetyl-L-glutamate + ATP = N-acetyl-L-glutamyl 5-phosphate + ADP. The protein operates within amino-acid biosynthesis; L-arginine biosynthesis; N(2)-acetyl-L-ornithine from L-glutamate: step 2/4. Catalyzes the ATP-dependent phosphorylation of N-acetyl-L-glutamate. The polypeptide is Acetylglutamate kinase (Thermotoga petrophila (strain ATCC BAA-488 / DSM 13995 / JCM 10881 / RKU-1)).